Reading from the N-terminus, the 1349-residue chain is ABC multidrug transporter mdr1 (1349 aa).

The segment at 1–62 is disordered; it reads MPAPETGASS…PDGKQKDHGK (62 aa). Residues 35-45 are compositionally biased toward basic and acidic residues; that stretch reads DNEKPHDHHSL. Transmembrane regions (helical) follow at residues 108–128, 162–182, 234–254, and 257–277; these read ILIILVSAICAIAAGAALPLF, YFVYLGIAEFVTVYVSTVGFI, KVGLTLTAFATFVTAFIVAYV, and WKLALICTSTIVALVMVMGGG. The region spanning 112–402 is the ABC transmembrane type-1 1 domain; that stretch reads LVSAICAIAA…VAPNGQAFTN (291 aa). A glycan (N-linked (GlcNAc...) asparagine) is linked at N308. The next 2 membrane-spanning stretches (helical) occupy residues 339–359 and 371–391; these read ILGMMIGGMFGIMFSNYGLGF and VNVGQVLTVLMSILIGSFSLG. Residues 437-682 enclose the ABC transporter 1 domain; sequence IEFRNVKHIY…KGTYYKLVEA (246 aa). Residue 472–479 participates in ATP binding; sequence GPSGSGKS. Helical transmembrane passes span 779 to 799 and 828 to 848; these read MLIGLTFSFLAGGGQPTQAFL and FFVVGIAQFISLSINGTAFAI. An ABC transmembrane type-1 2 domain is found at 780–1069; sequence LIGLTFSFLA…VFSFAPDMGK (290 aa). Residues N878 and N893 are each glycosylated (N-linked (GlcNAc...) asparagine). 4 consecutive transmembrane segments (helical) span residues 896–916, 926–948, 1016–1036, and 1043–1063; these read GVSGVTLGTIIMTSTTLGAAM, LALVCISVVPILLACGFLRFYML, ALVFFCVALGFWYGGTLLGHH, and FFVCFSEILFGAQSAGTVFSF. In terms of domain architecture, ABC transporter 2 spans 1104–1342; sequence IEFRDVHFRY…KGRYYELVNL (239 aa). N-linked (GlcNAc...) asparagine glycosylation is present at N1126. 1139–1146 provides a ligand contact to ATP; the sequence is GPSGCGKS.

This sequence belongs to the ABC transporter superfamily. ABCB family. Multidrug resistance exporter (TC 3.A.1.201) subfamily.

The protein resides in the cell membrane. The catalysed reaction is voriconazole(in) + ATP + H2O = voriconazole(out) + ADP + phosphate + H(+). Functionally, pleiotropic ABC efflux transporter that may be involved in A.fumigatus adaptation to azoles such as vorizonazole. The protein is ABC multidrug transporter mdr1 of Aspergillus fumigatus (strain ATCC MYA-4609 / CBS 101355 / FGSC A1100 / Af293) (Neosartorya fumigata).